Reading from the N-terminus, the 187-residue chain is Holliday junction branch migration complex subunit RuvA (187 aa).

A domain I region spans residues 1–64 (MIEYVRGIIE…EDGFQIFGFK (64 aa)). The segment at 65–136 (TKEELDLFEK…ELKDKLPKEI (72 aa)) is domain II. A flexible linker region spans residues 136 to 139 (IVFE). The segment at 140–187 (GDNNFSNEALEALLALGYTKSEAIYALADITCDSVEDAVKQALKKLMK) is domain III.

Belongs to the RuvA family. As to quaternary structure, homotetramer. Forms an RuvA(8)-RuvB(12)-Holliday junction (HJ) complex. HJ DNA is sandwiched between 2 RuvA tetramers; dsDNA enters through RuvA and exits via RuvB. An RuvB hexamer assembles on each DNA strand where it exits the tetramer. Each RuvB hexamer is contacted by two RuvA subunits (via domain III) on 2 adjacent RuvB subunits; this complex drives branch migration. In the full resolvosome a probable DNA-RuvA(4)-RuvB(12)-RuvC(2) complex forms which resolves the HJ.

The protein localises to the cytoplasm. Its function is as follows. The RuvA-RuvB-RuvC complex processes Holliday junction (HJ) DNA during genetic recombination and DNA repair, while the RuvA-RuvB complex plays an important role in the rescue of blocked DNA replication forks via replication fork reversal (RFR). RuvA specifically binds to HJ cruciform DNA, conferring on it an open structure. The RuvB hexamer acts as an ATP-dependent pump, pulling dsDNA into and through the RuvAB complex. HJ branch migration allows RuvC to scan DNA until it finds its consensus sequence, where it cleaves and resolves the cruciform DNA. The protein is Holliday junction branch migration complex subunit RuvA of Thermoanaerobacter pseudethanolicus (strain ATCC 33223 / 39E) (Clostridium thermohydrosulfuricum).